Reading from the N-terminus, the 82-residue chain is Polyferredoxin protein FwdG (82 aa).

4Fe-4S ferredoxin-type domains follow at residues 4–33 (YELV…PETW) and 51–80 (VVTV…LVFK). The [4Fe-4S] cluster site is built by Cys-13, Cys-16, Cys-19, Cys-23, Cys-60, Cys-63, Cys-66, and Cys-70.

Requires [4Fe-4S] cluster as cofactor.

This Methanocaldococcus jannaschii (strain ATCC 43067 / DSM 2661 / JAL-1 / JCM 10045 / NBRC 100440) (Methanococcus jannaschii) protein is Polyferredoxin protein FwdG (fwdG).